Consider the following 160-residue polypeptide: Nucleotide-binding protein VV1_2655 (160 aa).

The protein belongs to the YajQ family.

In terms of biological role, nucleotide-binding protein. This chain is Nucleotide-binding protein VV1_2655, found in Vibrio vulnificus (strain CMCP6).